The chain runs to 505 residues: Protein DETOXIFICATION 50 (505 aa).

Helical transmembrane passes span 46–66, 78–98, 121–141, 155–175, 194–214, 219–239, 275–295, 305–325, 344–364, 380–400, 424–444, and 446–466; these read LVLT…FLGG, AAAF…MGVE, IILL…MEKI, AHIF…LHPL, IASF…GLGI, LSGV…ICFF, ISVC…GFLL, GILI…SLGV, AAIV…AFTV, IMKL…GNCP, AFYA…GFGF, and GLWL…MAAT.

It belongs to the multi antimicrobial extrusion (MATE) (TC 2.A.66.1) family. As to expression, preferentially expressed in rosette leaves. Detected mainly in the vascular tissues and guard cells. Mostly detected at reproductive stages in young anthers, in mature pollens and during pollen germination on the pistil. Also expressed in developing seeds.

The protein localises to the cell membrane. It is found in the late endosome membrane. Functionally, functions as a multidrug and toxin extrusion transporter in the export of abscisic acid (ABA) in guard cells. Plays a role in ABA-mediated growth inhibition and responses to drought conditions. May act as a negative regulator of hypocotyl cell elongation in the light. In Arabidopsis thaliana (Mouse-ear cress), this protein is Protein DETOXIFICATION 50.